A 193-amino-acid chain; its full sequence is dCTP deaminase (193 aa).

DCTP-binding positions include 110-115 (RSSLAR), D128, 136-138 (VLE), Y171, K178, and Q182. E138 functions as the Proton donor/acceptor in the catalytic mechanism. The tract at residues 169–193 (RPYNRREDAKYRNQQGAVASRIDKD) is disordered.

This sequence belongs to the dCTP deaminase family. Homotrimer.

The catalysed reaction is dCTP + H2O + H(+) = dUTP + NH4(+). It functions in the pathway pyrimidine metabolism; dUMP biosynthesis; dUMP from dCTP (dUTP route): step 1/2. In terms of biological role, catalyzes the deamination of dCTP to dUTP. This chain is dCTP deaminase, found in Escherichia coli O8 (strain IAI1).